Consider the following 220-residue polypeptide: MMQELKILNEKRAEIYWWLSSLFFKELSEQDIARYHSAEVRTFLSGLADEQSLNREVKHLVEALNRLQDRQDAQLELAADFCDLFLKSDRDSALPYASVYADQGLLNGKPAQQMRELLSAHGVKVEQNLNEPEDHLAIQLDFLAHLAISANQIEHSAQLSLALQAQSDFISQHLLTWLPAFAERCTQFDAFGLYSAAARLALAFIQQDKHCLDELIQETH.

Belongs to the TorD/DmsD family. TorD subfamily.

It is found in the cytoplasm. In terms of biological role, involved in the biogenesis of TorA. Acts on TorA before the insertion of the molybdenum cofactor and, as a result, probably favors a conformation of the apoenzyme that is competent for acquiring the cofactor. The chain is Chaperone protein TorD from Vibrio cholerae serotype O1 (strain M66-2).